Reading from the N-terminus, the 965-residue chain is Phosphoenolpyruvate carboxylase 1 (965 aa).

Position 11 is a phosphoserine (serine 11). Histidine 172 is a catalytic residue. Tryptophan 283, arginine 450, and aspartate 597 together coordinate D-glucose 6-phosphate. Residue lysine 600 is part of the active site. Arginine 635 is a D-glucose 6-phosphate binding site. The active site involves arginine 641. Arginine 641 contacts L-aspartate. Threonine 665 provides a ligand contact to D-glucose 6-phosphate. Glutamine 673 contributes to the L-aspartate binding site. D-glucose 6-phosphate-binding positions include arginine 753 and 767-769 (RAI). L-aspartate-binding residues include lysine 829, arginine 888, and asparagine 963.

It belongs to the PEPCase type 1 family. In terms of assembly, homotetramer. Mg(2+) serves as cofactor. Expressed in roots and stems and at low levels in leaves. Preferentially expressed in the phloem and in root tips.

It is found in the cytoplasm. The enzyme catalyses oxaloacetate + phosphate = phosphoenolpyruvate + hydrogencarbonate. With respect to regulation, activated by the allosteric regulator glucose-6-phosphate. Inhibited by malate and aspartate. Up regulated by light-reversible phosphorylation. Its function is as follows. Through the carboxylation of phosphoenolpyruvate (PEP) it forms oxaloacetate, a four-carbon dicarboxylic acid source for the tricarboxylic acid cycle. May be involved in phloem loading with sucrose and in anions and cations uptake and amino acid biosynthesis in roots. In Flaveria trinervia (Clustered yellowtops), this protein is Phosphoenolpyruvate carboxylase 1.